The sequence spans 338 residues: Heat-inducible transcription repressor HrcA (338 aa).

It belongs to the HrcA family.

Functionally, negative regulator of class I heat shock genes (grpE-dnaK-dnaJ and groELS operons). Prevents heat-shock induction of these operons. The polypeptide is Heat-inducible transcription repressor HrcA (Bacillus anthracis (strain A0248)).